A 202-amino-acid polypeptide reads, in one-letter code: Zinc metalloproteinase barnettlysin-1 (202 aa).

The Peptidase M12B domain occupies 6–200; it reads RYVELFIVVD…MKENPQCILN (195 aa). Ca(2+) contacts are provided by Glu9 and Asp93. 3 disulfides stabilise this stretch: Cys117–Cys197, Cys157–Cys181, and Cys159–Cys164. A Zn(2+)-binding site is contributed by His142. The active site involves Glu143. Zn(2+) contacts are provided by His146 and His152. Ca(2+) is bound by residues Cys197 and Asn200.

In terms of assembly, monomer. The cofactor is Zn(2+). In terms of tissue distribution, expressed by the venom gland.

The protein localises to the secreted. Its function is as follows. Non-hemorrhagic metalloproteinase that hydrolyzes the alpha chains of fibrinogen and fibrin but has no activity on beta- and gamma-chains. Cleaves X-Leu bonds. Inhibits platelet aggregation induced by the von Willebrand factor (VWF) (IC(50) is 1.4 uM) and type I collagen (IC(50) is 3.2 uM). Acts by cleaving the vWF and its receptor GPIb, and by cleaving the collagen-binding Alpha-2A domain of the collagen receptor alpha-2/beta-1 integrin (ITGA2/ITGB1). Also degrades the extracellular matrix protein fibronectin (FN1), but has no effect on laminin and type I collagen. The polypeptide is Zinc metalloproteinase barnettlysin-1 (Bothrops barnetti (Barnett's lancehead)).